A 410-amino-acid chain; its full sequence is Argininosuccinate synthase (410 aa).

10–18 (AYSGGLDTS) serves as a coordination point for ATP. 2 residues coordinate L-citrulline: tyrosine 88 and serine 93. Glycine 118 is an ATP binding site. L-aspartate is bound by residues threonine 120, asparagine 124, and aspartate 125. Residue asparagine 124 coordinates L-citrulline. Arginine 128, serine 177, serine 186, glutamate 262, and tyrosine 274 together coordinate L-citrulline.

This sequence belongs to the argininosuccinate synthase family. Type 1 subfamily. In terms of assembly, homotetramer.

The protein localises to the cytoplasm. The catalysed reaction is L-citrulline + L-aspartate + ATP = 2-(N(omega)-L-arginino)succinate + AMP + diphosphate + H(+). It functions in the pathway amino-acid biosynthesis; L-arginine biosynthesis; L-arginine from L-ornithine and carbamoyl phosphate: step 2/3. This is Argininosuccinate synthase from Caldanaerobacter subterraneus subsp. tengcongensis (strain DSM 15242 / JCM 11007 / NBRC 100824 / MB4) (Thermoanaerobacter tengcongensis).